Consider the following 612-residue polypeptide: Glycosyltransferase 25 family member (612 aa).

The first 20 residues, 1–20, serve as a signal peptide directing secretion; that stretch reads MNKQVIFGLLLACILVCISG. 4 N-linked (GlcNAc...) asparagine glycosylation sites follow: Asn106, Asn227, Asn263, and Asn524. A Prevents secretion from ER motif is present at residues 609-612; it reads HQEL.

The protein belongs to the glycosyltransferase 25 family.

It localises to the endoplasmic reticulum lumen. The sequence is that of Glycosyltransferase 25 family member from Drosophila melanogaster (Fruit fly).